An 81-amino-acid polypeptide reads, in one-letter code: Large ribosomal subunit protein bL31B (81 aa).

It belongs to the bacterial ribosomal protein bL31 family. Type B subfamily. In terms of assembly, part of the 50S ribosomal subunit.

This chain is Large ribosomal subunit protein bL31B, found in Bacillus cereus (strain G9842).